We begin with the raw amino-acid sequence, 450 residues long: tRNA modification GTPase MnmE (450 aa).

(6S)-5-formyl-5,6,7,8-tetrahydrofolate is bound by residues R24, E82, and K121. In terms of domain architecture, TrmE-type G spans 218–375 (GMHVVLVGQP…LRQVLLEAVG (158 aa)). Position 228 (N228) interacts with K(+). Residues 228–233 (NVGKSS), 247–253 (TDIAGTT), 272–275 (DTAG), and 356–358 (SAR) each bind GTP. S232 is a Mg(2+) binding site. 3 residues coordinate K(+): T247, I249, and T252. T253 is a Mg(2+) binding site. K450 serves as a coordination point for (6S)-5-formyl-5,6,7,8-tetrahydrofolate.

Belongs to the TRAFAC class TrmE-Era-EngA-EngB-Septin-like GTPase superfamily. TrmE GTPase family. In terms of assembly, homodimer. Heterotetramer of two MnmE and two MnmG subunits. K(+) serves as cofactor.

The protein localises to the cytoplasm. Functionally, exhibits a very high intrinsic GTPase hydrolysis rate. Involved in the addition of a carboxymethylaminomethyl (cmnm) group at the wobble position (U34) of certain tRNAs, forming tRNA-cmnm(5)s(2)U34. This is tRNA modification GTPase MnmE from Laribacter hongkongensis (strain HLHK9).